The primary structure comprises 741 residues: Photosystem I P700 chlorophyll a apoprotein A2 1 (741 aa).

8 helical membrane-spanning segments follow: residues 46–69, 135–158, 175–199, 273–291, 334–357, 373–399, 421–443, and 524–542; these read IFAT…FHVA, LYTG…LHLQ, LNHH…HVAI, MAHH…GHMY, LHFQ…QHMY, AALY…IFLV, AIIS…LYVH, and FLVH…LILV. 2 residues coordinate [4Fe-4S] cluster: C566 and C575. The next 2 helical transmembrane spans lie at 582–603 and 650–672; these read SFYL…YWHW and LSVW…MFLI. Residues H661, M669, and Y677 each coordinate chlorophyll a. Position 678 (W678) interacts with phylloquinone. The helical transmembrane segment at 714–734 threads the bilayer; the sequence is VVGLAHFTVGYVLTYAAFLIA.

It belongs to the PsaA/PsaB family. The PsaA/B heterodimer binds the P700 chlorophyll special pair and subsequent electron acceptors. PSI consists of a core antenna complex that captures photons, and an electron transfer chain that converts photonic excitation into a charge separation. The cyanobacterial PSI reaction center is composed of one copy each of PsaA,B,C,D,E,F,I,J,K,L,M and X, and forms trimeric complexes. Requires PSI electron transfer chain: 5 chlorophyll a, 1 chlorophyll a', 2 phylloquinones and 3 4Fe-4S clusters. PSI core antenna: 90 chlorophyll a, 22 carotenoids, 3 phospholipids and 1 galactolipid. P700 is a chlorophyll a/chlorophyll a' dimer, A0 is one or more chlorophyll a, A1 is one or both phylloquinones and FX is a shared 4Fe-4S iron-sulfur center. as cofactor.

Its subcellular location is the cellular thylakoid membrane. It catalyses the reaction reduced [plastocyanin] + hnu + oxidized [2Fe-2S]-[ferredoxin] = oxidized [plastocyanin] + reduced [2Fe-2S]-[ferredoxin]. Functionally, psaA and PsaB bind P700, the primary electron donor of photosystem I (PSI), as well as the electron acceptors A0, A1 and FX. PSI is a plastocyanin/cytochrome c6-ferredoxin oxidoreductase, converting photonic excitation into a charge separation, which transfers an electron from the donor P700 chlorophyll pair to the spectroscopically characterized acceptors A0, A1, FX, FA and FB in turn. Oxidized P700 is reduced on the lumenal side of the thylakoid membrane by plastocyanin or cytochrome c6. This Nostoc sp. (strain PCC 7120 / SAG 25.82 / UTEX 2576) protein is Photosystem I P700 chlorophyll a apoprotein A2 1 (psaB1).